The chain runs to 311 residues: tRNA-cytidine(32) 2-sulfurtransferase (311 aa).

A PP-loop motif motif is present at residues 47 to 52 (SGGKDS). Cys122, Cys125, and Cys213 together coordinate [4Fe-4S] cluster.

It belongs to the TtcA family. In terms of assembly, homodimer. Requires Mg(2+) as cofactor. The cofactor is [4Fe-4S] cluster.

The protein localises to the cytoplasm. The enzyme catalyses cytidine(32) in tRNA + S-sulfanyl-L-cysteinyl-[cysteine desulfurase] + AH2 + ATP = 2-thiocytidine(32) in tRNA + L-cysteinyl-[cysteine desulfurase] + A + AMP + diphosphate + H(+). Its pathway is tRNA modification. Its function is as follows. Catalyzes the ATP-dependent 2-thiolation of cytidine in position 32 of tRNA, to form 2-thiocytidine (s(2)C32). The sulfur atoms are provided by the cysteine/cysteine desulfurase (IscS) system. In Salmonella paratyphi A (strain ATCC 9150 / SARB42), this protein is tRNA-cytidine(32) 2-sulfurtransferase.